Consider the following 1139-residue polypeptide: GRIP and coiled-coil domain-containing protein (1139 aa).

The disordered stretch occupies residues 366–388; sequence NDDSQINNNVSNKVNSPDDDPNT. Positions 369–380 are enriched in polar residues; sequence SQINNNVSNKVN. 2 coiled-coil regions span residues 472 to 648 and 758 to 877; these read VTKL…INNE and LYIL…ETQQ. Residues 1004–1024 form a disordered region; that stretch reads NEQENDNNNNNNNNNNNNNVE. Residues 1009 to 1022 are compositionally biased toward low complexity; that stretch reads DNNNNNNNNNNNNN. A coiled-coil region spans residues 1043–1084; the sequence is YKKIRKKLETYEILLNEQQEGKKKMTEEINSLKNQVKNYESI. Residues 1084-1135 form the GRIP domain; the sequence is INGNYQHIIYQKNILSNFIAQIPSRIQVDDYVSVIFNSFNFSNQEIEAINIK.

The sequence is that of GRIP and coiled-coil domain-containing protein from Plasmodium falciparum (isolate 3D7).